Here is a 361-residue protein sequence, read N- to C-terminus: Serine/threonine-protein kinase SAPK9 (361 aa).

A Protein kinase domain is found at 22 to 278; it reads YELVKEIGSG…MPEIKNHPWF (257 aa). Residues 28–36 and Lys51 contribute to the ATP site; that span reads IGSGNFGVA. Asp141 acts as the Proton acceptor in catalysis.

It belongs to the protein kinase superfamily. Ser/Thr protein kinase family. Interacts with BZIP46. In terms of processing, may be phosphorylated. Expressed in leaf sheaths and roots. Expressed in shoots of young seedlings.

The protein resides in the cytoplasm. It is found in the nucleus. It catalyses the reaction L-seryl-[protein] + ATP = O-phospho-L-seryl-[protein] + ADP + H(+). The enzyme catalyses L-threonyl-[protein] + ATP = O-phospho-L-threonyl-[protein] + ADP + H(+). Its activity is regulated as follows. Activated by hyperosmotic stress and abscisic acid (ABA). Functionally, may play a role in signal transduction of hyperosmotic response. Can phosphorylate BZIP46 in vitro. This chain is Serine/threonine-protein kinase SAPK9 (SAPK9), found in Oryza sativa subsp. japonica (Rice).